Reading from the N-terminus, the 345-residue chain is 3-dehydroquinate synthase (345 aa).

It belongs to the archaeal-type DHQ synthase family.

It catalyses the reaction 2-amino-2,3,7-trideoxy-D-lyxo-hept-6-ulosonate + NAD(+) + H2O = 3-dehydroquinate + NH4(+) + NADH + H(+). Functionally, catalyzes the oxidative deamination and cyclization of 2-amino-3,7-dideoxy-D-threo-hept-6-ulosonic acid (ADH) to yield 3-dehydroquinate (DHQ), which is fed into the canonical shikimic pathway of aromatic amino acid biosynthesis. This Methanocorpusculum labreanum (strain ATCC 43576 / DSM 4855 / Z) protein is 3-dehydroquinate synthase.